We begin with the raw amino-acid sequence, 313 residues long: Proline iminopeptidase (313 aa).

In terms of domain architecture, AB hydrolase-1 spans 35–298 (KPVVMLHGGP…SPASGHSAFE (264 aa)). S110 serves as the catalytic Nucleophile. The active site involves D266. The active-site Proton donor is the H294.

This sequence belongs to the peptidase S33 family. Homooligomer.

It localises to the cytoplasm. The catalysed reaction is Release of N-terminal proline from a peptide.. Its function is as follows. May be involved in proline metabolism and sensitivity to ascamycin. Has ascamycin dealanylating activity. The sequence is that of Proline iminopeptidase (pip) from Xanthomonas citri (Xanthomonas campestris pv. citri).